Here is a 97-residue protein sequence, read N- to C-terminus: Co-chaperonin GroES (97 aa).

The protein belongs to the GroES chaperonin family. Heptamer of 7 subunits arranged in a ring. Interacts with the chaperonin GroEL.

It is found in the cytoplasm. Functionally, together with the chaperonin GroEL, plays an essential role in assisting protein folding. The GroEL-GroES system forms a nano-cage that allows encapsulation of the non-native substrate proteins and provides a physical environment optimized to promote and accelerate protein folding. GroES binds to the apical surface of the GroEL ring, thereby capping the opening of the GroEL channel. In Stutzerimonas stutzeri (strain A1501) (Pseudomonas stutzeri), this protein is Co-chaperonin GroES.